The primary structure comprises 210 residues: Somatotropin-2 (210 aa).

The signal sequence occupies residues Met1–Ala22. His38 is a binding site for Zn(2+). Cys71 and Cys183 are oxidised to a cystine. Glu192 provides a ligand contact to Zn(2+). The cysteines at positions 200 and 208 are disulfide-linked.

It belongs to the somatotropin/prolactin family.

Its subcellular location is the secreted. Functionally, growth hormone plays an important role in growth control and is involved in the regulation of several anabolic processes. Implicated as an osmoregulatory substance important for seawater adaptation. In Oncorhynchus nerka (Sockeye salmon), this protein is Somatotropin-2 (gh2).